The primary structure comprises 199 residues: Large ribosomal subunit protein bL25 (199 aa).

The protein belongs to the bacterial ribosomal protein bL25 family. CTC subfamily. In terms of assembly, part of the 50S ribosomal subunit; part of the 5S rRNA/L5/L18/L25 subcomplex. Contacts the 5S rRNA. Binds to the 5S rRNA independently of L5 and L18.

In terms of biological role, this is one of the proteins that binds to the 5S RNA in the ribosome where it forms part of the central protuberance. This is Large ribosomal subunit protein bL25 from Pelobacter propionicus (strain DSM 2379 / NBRC 103807 / OttBd1).